Reading from the N-terminus, the 429-residue chain is Serine hydroxymethyltransferase (429 aa).

Residues Leu127 and Gly131 to Leu133 each bind (6S)-5,6,7,8-tetrahydrofolate. At Lys236 the chain carries N6-(pyridoxal phosphate)lysine. Glu252 is a binding site for (6S)-5,6,7,8-tetrahydrofolate.

It belongs to the SHMT family. Homodimer. Requires pyridoxal 5'-phosphate as cofactor.

It is found in the cytoplasm. The enzyme catalyses (6R)-5,10-methylene-5,6,7,8-tetrahydrofolate + glycine + H2O = (6S)-5,6,7,8-tetrahydrofolate + L-serine. It participates in one-carbon metabolism; tetrahydrofolate interconversion. The protein operates within amino-acid biosynthesis; glycine biosynthesis; glycine from L-serine: step 1/1. Catalyzes the reversible interconversion of serine and glycine with tetrahydrofolate (THF) serving as the one-carbon carrier. This reaction serves as the major source of one-carbon groups required for the biosynthesis of purines, thymidylate, methionine, and other important biomolecules. Also exhibits THF-independent aldolase activity toward beta-hydroxyamino acids, producing glycine and aldehydes, via a retro-aldol mechanism. The protein is Serine hydroxymethyltransferase of Rhodospirillum centenum (strain ATCC 51521 / SW).